Consider the following 424-residue polypeptide: Serine--tRNA ligase (424 aa).

L-serine is bound at residue 230 to 232 (TAE). Position 261-263 (261-263 (RSE)) interacts with ATP. E284 serves as a coordination point for L-serine. Position 348–351 (348–351 (EISS)) interacts with ATP. S384 lines the L-serine pocket.

Belongs to the class-II aminoacyl-tRNA synthetase family. Type-1 seryl-tRNA synthetase subfamily. As to quaternary structure, homodimer. The tRNA molecule binds across the dimer.

Its subcellular location is the cytoplasm. The enzyme catalyses tRNA(Ser) + L-serine + ATP = L-seryl-tRNA(Ser) + AMP + diphosphate + H(+). It catalyses the reaction tRNA(Sec) + L-serine + ATP = L-seryl-tRNA(Sec) + AMP + diphosphate + H(+). The protein operates within aminoacyl-tRNA biosynthesis; selenocysteinyl-tRNA(Sec) biosynthesis; L-seryl-tRNA(Sec) from L-serine and tRNA(Sec): step 1/1. Catalyzes the attachment of serine to tRNA(Ser). Is also able to aminoacylate tRNA(Sec) with serine, to form the misacylated tRNA L-seryl-tRNA(Sec), which will be further converted into selenocysteinyl-tRNA(Sec). The polypeptide is Serine--tRNA ligase (Desulfatibacillum aliphaticivorans).